Reading from the N-terminus, the 193-residue chain is NAD(P)H-quinone oxidoreductase subunit I (193 aa).

4Fe-4S ferredoxin-type domains are found at residues 56–85 and 96–125; these read GRIH…VDWE and KHYS…MTEE. Positions 65, 68, 71, 75, 105, 108, 111, and 115 each coordinate [4Fe-4S] cluster. Residues 174 to 193 form a disordered region; the sequence is NLPKGSQRAGQHPEDLVKAE. Basic and acidic residues predominate over residues 184 to 193; that stretch reads QHPEDLVKAE.

Belongs to the complex I 23 kDa subunit family. As to quaternary structure, NDH-1 is composed of at least 11 different subunits. [4Fe-4S] cluster serves as cofactor.

It is found in the cellular thylakoid membrane. It carries out the reaction a plastoquinone + NADH + (n+1) H(+)(in) = a plastoquinol + NAD(+) + n H(+)(out). The catalysed reaction is a plastoquinone + NADPH + (n+1) H(+)(in) = a plastoquinol + NADP(+) + n H(+)(out). Functionally, NDH-1 shuttles electrons from an unknown electron donor, via FMN and iron-sulfur (Fe-S) centers, to quinones in the respiratory and/or the photosynthetic chain. The immediate electron acceptor for the enzyme in this species is believed to be plastoquinone. Couples the redox reaction to proton translocation, and thus conserves the redox energy in a proton gradient. In Synechocystis sp. (strain ATCC 27184 / PCC 6803 / Kazusa), this protein is NAD(P)H-quinone oxidoreductase subunit I.